We begin with the raw amino-acid sequence, 310 residues long: Transcription initiation factor IIB (310 aa).

A run of 2 repeats spans residues 126–209 (REIT…VREL) and 220–301 (RYVS…ELVQ).

This sequence belongs to the TFIIB family.

Functionally, stabilizes TBP binding to an archaeal box-A promoter. Also responsible for recruiting RNA polymerase II to the pre-initiation complex (DNA-TBP-TFIIB). The chain is Transcription initiation factor IIB from Pyrodictium occultum.